Consider the following 407-residue polypeptide: Large ribosomal subunit protein uL3-like (407 aa).

The span at 1–31 (MSHRKFSAPRHGHLGFLPHKRSHRHRGKVKT) shows a compositional bias: basic residues. 2 disordered regions span residues 1 to 35 (MSHRKFSAPRHGHLGFLPHKRSHRHRGKVKTWPRD) and 383 to 407 (QEKRAFMGPQKKHLEKEKPETSGDL). Residues 394–407 (KHLEKEKPETSGDL) are compositionally biased toward basic and acidic residues.

It belongs to the universal ribosomal protein uL3 family. Component of the large ribosomal subunit in striated muscle cells.

Functionally, heart- and skeletal muscle-specific component of the ribosome, which regulates muscle function. Component of the large ribosomal subunit in striated muscle cells: replaces the RPL3 paralog in the ribosome in these cells. The ribosome is a large ribonucleoprotein complex responsible for the synthesis of proteins in the cell. Inhibits myotube growth and muscle function. This is Large ribosomal subunit protein uL3-like (RPL3L) from Bos taurus (Bovine).